Here is a 43-residue protein sequence, read N- to C-terminus: SPbeta prophage-derived uncharacterized protein YopG (43 aa).

The chain is SPbeta prophage-derived uncharacterized protein YopG (yopG) from Bacillus subtilis (strain 168).